A 71-amino-acid chain; its full sequence is Conotoxin Pl071 (71 aa).

A signal peptide spans 1–20; sequence MSRLFMILLVICVITLGTDA. Positions 21–31 are excised as a propeptide; it reads SQAEDSGTEKR. The residue at position 69 (tyrosine 69) is a Tyrosine amide.

The protein belongs to the conotoxin NSf-1 superfamily. In terms of tissue distribution, expressed by the venom duct.

The protein localises to the secreted. Functionally, probable neurotoxin with unknown target. Possibly targets ion channels. This chain is Conotoxin Pl071, found in Conus planorbis (Planorbis cone).